We begin with the raw amino-acid sequence, 517 residues long: ATP synthase subunit beta (517 aa).

ATP is bound at residue 167 to 174 (GGAGVGKT). Composition is skewed to basic and acidic residues over residues 475–484 (AESMGAKMDD) and 495–508 (DSKD…KADD). Residues 475 to 517 (AESMGAKMDDGGSDGAPPPSDSKDKGKGDSKADDKGDDADKDA) form a disordered region.

It belongs to the ATPase alpha/beta chains family. In terms of assembly, F-type ATPases have 2 components, CF(1) - the catalytic core - and CF(0) - the membrane proton channel. CF(1) has five subunits: alpha(3), beta(3), gamma(1), delta(1), epsilon(1). CF(0) has three main subunits: a(1), b(2) and c(9-12). The alpha and beta chains form an alternating ring which encloses part of the gamma chain. CF(1) is attached to CF(0) by a central stalk formed by the gamma and epsilon chains, while a peripheral stalk is formed by the delta and b chains.

It is found in the cell membrane. It catalyses the reaction ATP + H2O + 4 H(+)(in) = ADP + phosphate + 5 H(+)(out). Its function is as follows. Produces ATP from ADP in the presence of a proton gradient across the membrane. The catalytic sites are hosted primarily by the beta subunits. The polypeptide is ATP synthase subunit beta (Mycobacterium sp. (strain JLS)).